Reading from the N-terminus, the 366-residue chain is S-adenosylmethionine:tRNA ribosyltransferase-isomerase (366 aa).

This sequence belongs to the QueA family. In terms of assembly, monomer.

Its subcellular location is the cytoplasm. It carries out the reaction 7-aminomethyl-7-carbaguanosine(34) in tRNA + S-adenosyl-L-methionine = epoxyqueuosine(34) in tRNA + adenine + L-methionine + 2 H(+). It participates in tRNA modification; tRNA-queuosine biosynthesis. Its function is as follows. Transfers and isomerizes the ribose moiety from AdoMet to the 7-aminomethyl group of 7-deazaguanine (preQ1-tRNA) to give epoxyqueuosine (oQ-tRNA). The sequence is that of S-adenosylmethionine:tRNA ribosyltransferase-isomerase from Bradyrhizobium diazoefficiens (strain JCM 10833 / BCRC 13528 / IAM 13628 / NBRC 14792 / USDA 110).